The following is a 249-amino-acid chain: Probable septum site-determining protein MinC (249 aa).

The disordered stretch occupies residues 115–141; the sequence is KPAQEAPAQAEPEAAAAPEPANEPAPA. A compositionally biased stretch (low complexity) spans 118-141; sequence QEAPAQAEPEAAAAPEPANEPAPA.

Belongs to the MinC family. Interacts with MinD and FtsZ.

Its function is as follows. Cell division inhibitor that blocks the formation of polar Z ring septums. Rapidly oscillates between the poles of the cell to destabilize FtsZ filaments that have formed before they mature into polar Z rings. Prevents FtsZ polymerization. The chain is Probable septum site-determining protein MinC from Marinobacter nauticus (strain ATCC 700491 / DSM 11845 / VT8) (Marinobacter aquaeolei).